The primary structure comprises 465 residues: FAD-dependent oxidoreductase pigF (465 aa).

An N-terminal signal peptide occupies residues 1 to 17 (MMLLTLLILSSVGLAAA). Asn95, Asn138, Asn260, and Asn327 each carry an N-linked (GlcNAc...) asparagine glycan. A lipid anchor (GPI-anchor amidated aspartate) is attached at Asp444. A propeptide spans 445 to 465 (SASGIWNLTNAVVLPGLLTGL) (removed in mature form). An N-linked (GlcNAc...) asparagine glycan is attached at Asn451.

This sequence belongs to the beta-cyclopiazonate dehydrogenase family. FAD is required as a cofactor.

The protein resides in the cell membrane. The protein operates within secondary metabolite biosynthesis. In terms of biological role, FAD-dependent oxidoreductase; part of the gene cluster that mediates the biosynthesis of azaphilone pigments (MonAzPs), a complex mixture of compounds with a common azaphilone skeleton very widely used as food colorants. Within the pathway, pigF desaturates C6(7) to afford the orange and red pigments from yellow pigments. The first step of the pathway is performed by the nrPKS pigA that forms the hexaketide precursor from successive condensations of five malonyl-CoA units, with a simple acetyl-CoA starter unit. The role of esterase pigG is not clear, but it may play at most a supplementary role in the formation of the benzaldehyde produced by the pigA nrPKS. This very reactive benzaldehyde is intercepted by the pigC ketoreductase that to provide the first stable enzyme-free MonAzPs intermediate, 6-(4-hydroxy-2-oxopentyl)-3-methyl-2,4-dioxocyclohexane carbaldehyde, also known as M7PKS-1. The FAD-dependent monooxygenase pigN hydroxylates M7PKS-1 at C-4, which triggers the formation of the pyran ring. PigJ, pigK and pigD are involved in the acetylation of the pyran ring. PigJ and pigK form the two subunits of a dedicated fungal FAS that produces the side chain fatty acyl moiety of MonAzPs and pigD transfers the fatty acyl chain to the C-4 alcohol. PigM and pigO are involved in the elimination of the omega-1 alcohol. PigM acts as an O-acetyltransferase that synthesizes the putative O-11 acetyl intermediate whereas pigO eliminates acetic acid to yield an intermediate with a C10(11) double bond. The dehydration of the C-11 alcohol followed by the reduction of the C6(7) double bond by the NAD(P)H-dependent oxidoreductase pigE increases the electrophilicity of the C-5 ketone of the resulting acyl benzopyran. This in turn sets up the C-5 ketone for an intramolecular Knoevenagel aldol condensation with the C-20 enol of the side chain. This condensation affords the characteristic linear tricyclic carbon skeletons of the yellow pigments that serve as the common precursors for the classical yellow pigments monascin and ankaflavin, orange pigments rubopunctatin and monascorubrin, and red pigments ribropunctamine and monascorubramine. The FAD-dependent oxidoreductase pigF is especially invoved in the biosynthesis of orange and red pigments via desaturation of C6(7). The sequence is that of FAD-dependent oxidoreductase pigF from Monascus ruber (Mold).